The following is a 156-amino-acid chain: MSRRHAAEKRQVLPDAKFGDMVLTKFMNNLMIDGKKAVAERIVYNAFDRVEGKLKRAPVEVFHEALENIKPAVEVRSRRVGGATYQVPVDVRPERREALAIRWLINASRARNENTMEERLAGELVDAVNMRGSAVKKREDTHKMADANRAFSHYRW.

Belongs to the universal ribosomal protein uS7 family. In terms of assembly, part of the 30S ribosomal subunit. Contacts proteins S9 and S11.

In terms of biological role, one of the primary rRNA binding proteins, it binds directly to 16S rRNA where it nucleates assembly of the head domain of the 30S subunit. Is located at the subunit interface close to the decoding center, probably blocks exit of the E-site tRNA. This is Small ribosomal subunit protein uS7 from Jannaschia sp. (strain CCS1).